The chain runs to 272 residues: Anamorsin homolog (272 aa).

An N-terminal SAM-like domain region spans residues 1-156 (MDSMMNQKTV…KIGSSFALKK (156 aa)). Residues 157–185 (PVTNLFKIDLDDDVDLIDEDSLLTEEDLM) form a linker region. The [2Fe-2S] cluster site is built by Cys195, Cys202, Cys205, and Cys207. Residues 195–207 (CETTKKACKNCVC) are fe-S binding site A. Residues Cys233, Cys236, Cys244, and Cys247 each coordinate [4Fe-4S] cluster. 2 short sequence motifs (cx2C motif) span residues 233 to 236 (CGSC) and 244 to 247 (CGTC). The segment at 233 to 247 (CGSCGLGDAFRCGTC) is fe-S binding site B.

Belongs to the anamorsin family. Monomer. Interacts with ATR3. [2Fe-2S] cluster serves as cofactor. Requires [4Fe-4S] cluster as cofactor.

Its subcellular location is the cytoplasm. It is found in the mitochondrion intermembrane space. Functionally, component of the cytosolic iron-sulfur (Fe-S) protein assembly (CIA) machinery. Required for the maturation of extramitochondrial Fe-S proteins. Part of an electron transfer chain functioning in an early step of cytosolic Fe-S biogenesis, facilitating the de novo assembly of a [4Fe-4S] cluster on the cytosolic Fe-S scaffold complex. Electrons are transferred from NADPH via FAD- and FMN-containing diflavin oxidoreductase TAH18/ATR3. Together with the diflavin oxidoreductase, also required for the assembly of the diferric tyrosyl radical cofactor of ribonucleotide reductase (RNR), probably by providing electrons for reduction during radical cofactor maturation in the catalytic small subunit. Required for embryo development. In Arabidopsis thaliana (Mouse-ear cress), this protein is Anamorsin homolog.